We begin with the raw amino-acid sequence, 692 residues long: DNA-binding protein RFX2 (692 aa).

The interval 1–26 is disordered; sequence MQNSEGGADSPATVALRPAAQPVPAS. The residue at position 26 (Ser26) is a Phosphoserine. A DNA-binding region (RFX-type winged-helix) is located at residues 169–244; that stretch reads TLQWLLDNYE…YHYYGIRLKP (76 aa). Residues 261–296 are disordered; sequence RQQPTHQKPRYRPAQKSDSLGDGSAHSNMHSTPEQA. A compositionally biased stretch (polar residues) spans 285–294; that stretch reads AHSNMHSTPE. The residue at position 386 (Ser386) is a Phosphoserine. The span at 660-685 shows a compositional bias: basic and acidic residues; that stretch reads DGHSSEADVDGRSLGEPLVKRERSDP. The interval 660 to 692 is disordered; it reads DGHSSEADVDGRSLGEPLVKRERSDPSHPLQGI.

This sequence belongs to the RFX family. As to quaternary structure, homodimer; probably only forms homodimers in testis. Heterodimer; heterodimerizes with RFX1 and RFX3. In terms of tissue distribution, expressed at highest level in testis. Expressed at lower level in thymus. Also expressed in stomach, kidney, liver, brain and heart. Weakly expressed in spleen and lung. Within testis, most abundantly present in spermatocytes: present from pachytene spermatocytes to early spermatids (at protein level). Also present in non-germinal tissues.

The protein localises to the nucleus. Its subcellular location is the cytoplasm. Functionally, transcription factor that acts as a key regulator of spermatogenesis. Acts by regulating expression of genes required for the haploid phase during spermiogenesis, such as genes required for cilium assembly and function. Recognizes and binds the X-box, a regulatory motif with DNA sequence 5'-GTNRCC(0-3N)RGYAAC-3' present on promoters. Probably activates transcription of the testis-specific histone gene H1-6. The polypeptide is DNA-binding protein RFX2 (Rfx2) (Rattus norvegicus (Rat)).